A 1238-amino-acid chain; its full sequence is MNNNNNNNNNKTTMNSMIVTVRIRPESQSEILNKNCKTIVRVIDDNMLVFDPNDIDIGAFNNNRNNKQSQQPVEQKYIFDRVFDQYATQEEVFENTTKELVSYVISGHNASVFAYGASGAGKTHTMVGGINTGPGIMVLTMKELFSLIEKDRSNQYIVSMSYLEVYNETIRDLLITNTGGGGNSNNKVLELCEDENKQIVIRDLSWEYPTSADQVFKLLKYGNLNRKQSPTQTNQTSSRSHAVLQITVKQQNLQDKSKISFGKLSLIDLAGSERASKTLNTGDRLKEGTSINKSLLALGNCIKALGELCKNQQSQQQSSNPNFIPYRDSKLTRILKDSLTGSCKTIMIANISPNSSSFEETHNTLKYAQRAKSIKTQITKNVFASSTNLITQYNEIIKEQREEIKQLKLKLIQATSNNNNSNNNNNNNNNNYFSNSFGSCGNKNQPIKQPTPPTSLFHQQNQKYYRNDDDDDDDNDQEENNDEVLINEDDEEVDGEDSNNRDNDESMIQQLEEMSLLINSNLQDTLTLKKTQSIQRQRKRELENELKSLEKQQQSILNENNNVDIIKRTNEIGSQILKIKTLESSINEKLEMNNQWRRKLQSELTLKFVNSPKNLKILIQQARAATLELDRFDLTERMIDDRSKLNLKTNECKSLKDSLSWMFGILSDGFKLLTENNLATDDFLKDFLKSGDLINNLDNSFIINENNDSNNNNIIENDDIDLSFNNDINNNNNNNNNNNNNNNNNNNNNNNNNNNNNNNNNNNNNNNNNNNNNNVPLNCNNSNSNINNKNQNIINPSPLKPRRIMSGSNNIIKSTNSNSRMTSTATTTAASTATATTTTIGKEKKGEIRSIVNPINKISSSTSLLPSSSTKISNTTPLYSRTSILRKRTLEIDDSTDSNPRTKKINVSSPVVTKPKQLLPSTTTATTTTLSSPLVNKPKQILPTTSSLQPKPHTKIQPHKNNNNNNNNIAPQMNMNIQIPNPIPIPIPMHVQIPISNPIPMPSPSSMNLKEKLDSLSQLCNNRSAKNENYNHNNSFNSQNPFVHPLQMHPPQLQLPLHPPQTMIMQSNMDLKMKLDSLSFFNNNNNNHQAQNDLSFDYGQNTLSNENLILHNKIASLSSTLINQPHPMRVKKLTPTSTISSSISTRPITTSTTTSTTVPSVVSNRIKSLVHSNSPIKENLYKEKLSSTASATLTPNRNNSQIVQPFKRGVLGNGPTSSSSRLLPSSRTTVNTSRKIIK.

The Kinesin motor domain maps to 16 to 374; it reads SMIVTVRIRP…LKYAQRAKSI (359 aa). Residue 116–123 participates in ATP binding; it reads GASGAGKT. Positions 417–436 are enriched in low complexity; it reads NNNNSNNNNNNNNNNYFSNS. Residues 417-503 are disordered; that stretch reads NNNNSNNNNN…DGEDSNNRDN (87 aa). Residues 437 to 464 show a composition bias toward polar residues; sequence FGSCGNKNQPIKQPTPPTSLFHQQNQKY. Residues 468–497 show a composition bias toward acidic residues; the sequence is DDDDDDDNDQEENNDEVLINEDDEEVDGED. Positions 527-602 form a coiled coil; the sequence is TLKKTQSIQR…NNQWRRKLQS (76 aa). Low complexity-rich tracts occupy residues 726–795, 918–934, and 961–971; these read NDIN…NIIN, LLPS…SSPL, and NNNNNNNNIAP. 4 disordered regions span residues 726–802, 891–971, 1134–1156, and 1191–1238; these read NDIN…LKPR, EIDD…NIAP, TPTS…TTST, and ATLT…KIIK. Residues 1191 to 1203 are compositionally biased toward polar residues; it reads ATLTPNRNNSQIV. The segment covering 1215–1228 has biased composition (low complexity); that stretch reads PTSSSSRLLPSSRT. A compositionally biased stretch (polar residues) spans 1229-1238; that stretch reads TVNTSRKIIK.

This sequence belongs to the TRAFAC class myosin-kinesin ATPase superfamily. Kinesin family.

It localises to the cytoplasm. The protein localises to the cytoskeleton. Functionally, microtubule-associated force-producing protein that plays a role in organelle transport. Its motor activity is directed toward the microtubule's plus end. Cooperates with kif8 and dynein to organize interphase microtubules. The chain is Kinesin-related protein 10 (kif10) from Dictyostelium discoideum (Social amoeba).